The following is a 506-amino-acid chain: Cationic amino acid transporter 8 (506 aa).

N-linked (GlcNAc...) asparagine glycans are attached at residues Asn2 and Asn5. The chain crosses the membrane as a helical span at residues Phe38 to Trp58. The N-linked (GlcNAc...) asparagine glycan is linked to Asn75. 5 consecutive transmembrane segments (helical) span residues Asn93–Tyr113, Ile116–Leu136, Leu147–Val167, Ile174–Ala194, and Ile211–Leu231. Asn277 carries an N-linked (GlcNAc...) asparagine glycan. A helical membrane pass occupies residues Ile302–Ile322. Residues Asn325 and Asn342 are each glycosylated (N-linked (GlcNAc...) asparagine). 4 consecutive transmembrane segments (helical) span residues Ser344 to Gly364, Ala372 to Ile392, Leu399 to Phe419, and Val427 to Cys447. Residues Asn453 and Asn456 are each glycosylated (N-linked (GlcNAc...) asparagine). A helical transmembrane segment spans residues Thr466 to Tyr486.

This sequence belongs to the SLC43A transporter (TC 2.A.1.44) family.

Its subcellular location is the cell membrane. Cationic amino acid transporter which transports L-arginine, L-lysine and, to a lesser extent, L-histidine and ornithine. Plays an essential role in gametogenesis. The chain is Cationic amino acid transporter 8 from Plasmodium berghei (strain Anka).